A 330-amino-acid chain; its full sequence is Aspartate--ammonia ligase (330 aa).

It belongs to the class-II aminoacyl-tRNA synthetase family. AsnA subfamily.

Its subcellular location is the cytoplasm. It catalyses the reaction L-aspartate + NH4(+) + ATP = L-asparagine + AMP + diphosphate + H(+). Its pathway is amino-acid biosynthesis; L-asparagine biosynthesis; L-asparagine from L-aspartate (ammonia route): step 1/1. The sequence is that of Aspartate--ammonia ligase from Mannheimia succiniciproducens (strain KCTC 0769BP / MBEL55E).